The following is a 268-amino-acid chain: Tryptophan synthase alpha chain (268 aa).

Catalysis depends on proton acceptor residues E49 and D60.

This sequence belongs to the TrpA family. Tetramer of two alpha and two beta chains.

It carries out the reaction (1S,2R)-1-C-(indol-3-yl)glycerol 3-phosphate + L-serine = D-glyceraldehyde 3-phosphate + L-tryptophan + H2O. It functions in the pathway amino-acid biosynthesis; L-tryptophan biosynthesis; L-tryptophan from chorismate: step 5/5. Functionally, the alpha subunit is responsible for the aldol cleavage of indoleglycerol phosphate to indole and glyceraldehyde 3-phosphate. The polypeptide is Tryptophan synthase alpha chain (Xanthomonas oryzae pv. oryzae (strain PXO99A)).